Consider the following 261-residue polypeptide: Methionine aminopeptidase (261 aa).

His78 contributes to the substrate binding site. The a divalent metal cation site is built by Asp96, Asp107, and His170. His177 contacts substrate. Glu202 and Glu233 together coordinate a divalent metal cation.

The protein belongs to the peptidase M24A family. Methionine aminopeptidase type 1 subfamily. In terms of assembly, monomer. Co(2+) serves as cofactor. It depends on Zn(2+) as a cofactor. Mn(2+) is required as a cofactor. The cofactor is Fe(2+).

It carries out the reaction Release of N-terminal amino acids, preferentially methionine, from peptides and arylamides.. Functionally, removes the N-terminal methionine from nascent proteins. The N-terminal methionine is often cleaved when the second residue in the primary sequence is small and uncharged (Met-Ala-, Cys, Gly, Pro, Ser, Thr, or Val). Requires deformylation of the N(alpha)-formylated initiator methionine before it can be hydrolyzed. The sequence is that of Methionine aminopeptidase from Buchnera aphidicola subsp. Schizaphis graminum (strain Sg).